The primary structure comprises 168 residues: Large ribosomal subunit protein uL24 (168 aa).

Positions 112–168 are disordered; that stretch reads LEGKDPRKQPKEAPKAAEKPAKEEPKKETPKAEEKPAKEEPKETKVEKKSEEKEDEN.

It belongs to the universal ribosomal protein uL24 family. Part of the 50S ribosomal subunit.

Functionally, one of two assembly initiator proteins, it binds directly to the 5'-end of the 23S rRNA, where it nucleates assembly of the 50S subunit. In terms of biological role, located at the polypeptide exit tunnel on the outside of the subunit. The chain is Large ribosomal subunit protein uL24 from Nitrosopumilus maritimus (strain SCM1).